The sequence spans 367 residues: Leucine-rich repeat-containing protein 28 (367 aa).

LRR repeat units follow at residues 16–36 (KHKN…ELLK), 42–63 (YLER…LAQK), 66–87 (NLVE…IGSL), 89–110 (KLQC…IGRL), 112–133 (ALRH…VGDL), 135–156 (ELQT…LHMC), 158–180 (SLQY…CQLP), 181–202 (SLNE…LGRS), and 204–226 (ELQY…LYNK).

The chain is Leucine-rich repeat-containing protein 28 (LRRC28) from Homo sapiens (Human).